The following is a 569-amino-acid chain: Urease subunit beta (569 aa).

A Urease domain is found at 131-569; that stretch reads GGIDTHIHFI…LSLAQLYNLF (439 aa). His136, His138, and Lys219 together coordinate Ni(2+). The residue at position 219 (Lys219) is an N6-carboxylysine. His221 provides a ligand contact to substrate. Ni(2+)-binding residues include His248 and His274. His322 functions as the Proton donor in the catalytic mechanism. Asp362 contacts Ni(2+).

This sequence belongs to the metallo-dependent hydrolases superfamily. Urease alpha subunit family. In terms of assembly, heterohexamer of 3 UreA (alpha) and 3 UreB (beta) subunits. The cofactor is Ni cation. Carboxylation allows a single lysine to coordinate two nickel ions.

Its subcellular location is the cytoplasm. It carries out the reaction urea + 2 H2O + H(+) = hydrogencarbonate + 2 NH4(+). The protein operates within nitrogen metabolism; urea degradation; CO(2) and NH(3) from urea (urease route): step 1/1. This is Urease subunit beta from Helicobacter felis (strain ATCC 49179 / CCUG 28539 / NCTC 12436 / CS1).